The primary structure comprises 395 residues: Chalcone synthase (395 aa).

N-acetylvaline is present on valine 2. Valine 2 bears the N-acetylalanine mark. Cysteine 169 is a catalytic residue.

This sequence belongs to the thiolase-like superfamily. Chalcone/stilbene synthases family.

It catalyses the reaction (E)-4-coumaroyl-CoA + 3 malonyl-CoA + 3 H(+) = 2',4,4',6'-tetrahydroxychalcone + 3 CO2 + 4 CoA. The protein operates within secondary metabolite biosynthesis; flavonoid biosynthesis. Its function is as follows. The primary product of this enzyme is 4,2',4',6'-tetrahydroxychalcone (also termed naringenin-chalcone or chalcone) which can under specific conditions spontaneously isomerize into naringenin. This Arabidopsis thaliana (Mouse-ear cress) protein is Chalcone synthase (CHS).